Reading from the N-terminus, the 152-residue chain is Catabolic 3-dehydroquinase 1 (152 aa).

Tyr-24 functions as the Proton acceptor in the catalytic mechanism. Positions 75, 81, and 88 each coordinate substrate. His-101 (proton donor) is an active-site residue. Substrate contacts are provided by residues 102-103 and Arg-112; that span reads VS.

The protein belongs to the type-II 3-dehydroquinase family. In terms of assembly, homododecamer. Adopts a ring-like structure, composed of an arrangement of two hexameric rings stacked on top of one another.

It carries out the reaction 3-dehydroquinate = 3-dehydroshikimate + H2O. It participates in aromatic compound metabolism; 3,4-dihydroxybenzoate biosynthesis; 3,4-dihydroxybenzoate from 3-dehydroquinate: step 1/2. Is involved in the catabolism of quinate. Allows the utilization of quinate as carbon source via the beta-ketoadipate pathway. The protein is Catabolic 3-dehydroquinase 1 of Aspergillus terreus (strain NIH 2624 / FGSC A1156).